The primary structure comprises 309 residues: Taste receptor type 2 member 31 (309 aa).

Residues 1 to 2 (MT) lie on the Extracellular side of the membrane. A helical membrane pass occupies residues 3-23 (TFLPIIFSSLVVVIFVIGNFA). Topologically, residues 24–55 (NGFIALVNSIEWFKXQKISFADQILTALAVSR) are cytoplasmic. A helical membrane pass occupies residues 56-76 (VGLLWVLLLNWYSTVLNPAFY). Residues 77–100 (SVEVRTTAYNVWAVTGHFSNWLAT) lie on the Extracellular side of the membrane. The helical transmembrane segment at 101-121 (SLSIFYLLKIANFSNFIFLHL) threads the bilayer. The Cytoplasmic portion of the chain corresponds to 122-126 (KRRVK). Residues 127–147 (SVILVMLLGPLLFLACQLFMI) traverse the membrane as a helical segment. At 148-181 (NMKEIVRTKEYEGNMTWKIKLRSAVYLSDATVTT) the chain is on the extracellular side. N-linked (GlcNAc...) asparagine glycosylation occurs at asparagine 161. The helical transmembrane segment at 182 to 202 (LGNLVPFTLTLLCFLLLICSL) threads the bilayer. Topologically, residues 203–229 (CKHLKKMQLHGKGSQDPSTKVHIKVLQ) are cytoplasmic. A helical membrane pass occupies residues 230 to 250 (TVISFLLLCAIYFLSIMISVW). At 251-259 (SFGSLKNKP) the chain is on the extracellular side. Residues 260 to 280 (VFMFCKAIRFSYPSIHPFILI) form a helical membrane-spanning segment. Residues 281 to 309 (WGNKKLKQTFLSVLRQVRYWVKGEKPSSP) lie on the Cytoplasmic side of the membrane.

The protein belongs to the G-protein coupled receptor T2R family.

The protein localises to the membrane. Its function is as follows. Receptor that may play a role in the perception of bitterness and is gustducin-linked. May play a role in sensing the chemical composition of the gastrointestinal content. The activity of this receptor may stimulate alpha gustducin, mediate PLC-beta-2 activation and lead to the gating of TRPM5. This is Taste receptor type 2 member 31 (TAS2R31) from Pan paniscus (Pygmy chimpanzee).